Consider the following 1691-residue polypeptide: ADAMTS-like protein 3 (1691 aa).

The signal sequence occupies residues 1–26 (MASWTSPWWVLIGMVFMHSPLPQTTA). The TSP type-1 1 domain maps to 75–124 (DGNWDAWGDWSDCSRTCGGGASYSLRRCLTGRNCEGQNIRYKTCSNHDCP). 3 disulfide bridges follow: cysteine 87/cysteine 118, cysteine 91/cysteine 123, and cysteine 102/cysteine 108. Asparagine 293 carries an N-linked (GlcNAc...) asparagine glycan. TSP type-1 domains lie at 418–468 (PLPR…APKP), 478–535 (DCPK…IPCY), and 564–626 (EEPT…EACD). Disulfide bonds link cysteine 576–cysteine 620, cysteine 580–cysteine 625, and cysteine 591–cysteine 609. Residue asparagine 681 is glycosylated (N-linked (GlcNAc...) asparagine). TSP type-1 domains follow at residues 703–760 (CPPR…FDCP), 763–818 (WHIE…ARTD), and 819–881 (CPPH…PECS). Asparagine 797 carries N-linked (GlcNAc...) asparagine glycosylation. Cystine bridges form between cysteine 831–cysteine 875, cysteine 835–cysteine 880, and cysteine 846–cysteine 863. In terms of domain architecture, Ig-like C2-type 1 spans 896–992 (PQILSVQRVY…IAGSAQETVV (97 aa)). 2 N-linked (GlcNAc...) asparagine glycosylation sites follow: asparagine 915 and asparagine 927. Cysteine 934 and cysteine 982 are disulfide-bonded. Asparagine 1102 carries an N-linked (GlcNAc...) asparagine glycan. The tract at residues 1146–1184 (PPAAQLRGETGSVSQSSHAKNSGKLTFKPKGPVLMRQSQ) is disordered. Positions 1156–1169 (GSVSQSSHAKNSGK) are enriched in polar residues. The 95-residue stretch at 1185 to 1279 (PPSISFNKTI…GSDVESSSVL (95 aa)) folds into the Ig-like C2-type 2 domain. The N-linked (GlcNAc...) asparagine glycan is linked to asparagine 1191. Residues cysteine 1215 and cysteine 1263 are joined by a disulfide bond. Residues asparagine 1292, asparagine 1316, asparagine 1330, asparagine 1343, asparagine 1349, asparagine 1356, asparagine 1432, asparagine 1516, asparagine 1574, and asparagine 1591 are each glycosylated (N-linked (GlcNAc...) asparagine). The 83-residue stretch at 1296–1378 (PEHNHLSVVV…ATNALGKAVA (83 aa)) folds into the Ig-like C2-type 3 domain. An intrachain disulfide couples cysteine 1321 to cysteine 1367. TSP type-1 domains are found at residues 1424-1482 (QEPF…NIRD) and 1483-1545 (CPAR…HPCV). In terms of domain architecture, TSP type-1 10 spans 1597 to 1644 (CDVCWHTGPWKPCTAACGRGFQSRKVDCIHTRSCKPVAKRHCVQKKKP). A PLAC domain is found at 1655-1691 (CDRDCTDTTHYCMFVKHLNLCSLDRYKQRCCQSCQEG).

Post-translationally, glycosylated. Can be O-fucosylated by POFUT2 on a serine or a threonine residue found within the consensus sequence C1-X(2)-(S/T)-C2-G of the TSP type-1 repeat domains where C1 and C2 are the first and second cysteine residue of the repeat, respectively. Fucosylated repeats can then be further glycosylated by the addition of a beta-1,3-glucose residue by the glucosyltransferase, B3GALTL. Fucosylation mediates the efficient secretion of ADAMTS family members. Can also be C-glycosylated with one or two mannose molecules on tryptophan residues within the consensus sequence W-X-X-W of the TPRs, and N-glycosylated. These other glycosylations can also facilitate secretion. In terms of tissue distribution, expressed in epithelial cells of the colon, fallopian tube, skin, breast, prostate, epididymis, liver, pancreatic islets and bile ducts, as well as by vascular endothelial cells, smooth muscle cells, fibroblasts, cortical and ganglionic neurons and cardiac myocytes. Also expressed by malignant epithelial cells in colon cancer, as well as breast, prostate, renal and skin tumors. Expression is significantly reduced in colon cancer compared to normal colon.

It localises to the secreted. It is found in the extracellular space. The protein localises to the extracellular matrix. In Homo sapiens (Human), this protein is ADAMTS-like protein 3 (ADAMTSL3).